Consider the following 393-residue polypeptide: Dihydrolipoyllysine-residue succinyltransferase component of 2-oxoglutarate dehydrogenase complex (393 aa).

The 76-residue stretch at 3–78 (RINILVPDLP…KSNQILGNIV (76 aa)) folds into the Lipoyl-binding domain. Residue Lys-44 is modified to N6-lipoyllysine. Residues His-364 and Asp-368 contribute to the active site.

The protein belongs to the 2-oxoacid dehydrogenase family. As to quaternary structure, forms a 24-polypeptide structural core with octahedral symmetry. Part of the 2-oxoglutarate dehydrogenase (OGDH) complex composed of E1 (2-oxoglutarate dehydrogenase), E2 (dihydrolipoamide succinyltransferase) and E3 (dihydrolipoamide dehydrogenase); the complex contains multiple copies of the three enzymatic components (E1, E2 and E3). The cofactor is (R)-lipoate.

The enzyme catalyses N(6)-[(R)-dihydrolipoyl]-L-lysyl-[protein] + succinyl-CoA = N(6)-[(R)-S(8)-succinyldihydrolipoyl]-L-lysyl-[protein] + CoA. Its pathway is amino-acid degradation; L-lysine degradation via saccharopine pathway; glutaryl-CoA from L-lysine: step 6/6. E2 component of the 2-oxoglutarate dehydrogenase (OGDH) complex which catalyzes the second step in the conversion of 2-oxoglutarate to succinyl-CoA and CO(2). The protein is Dihydrolipoyllysine-residue succinyltransferase component of 2-oxoglutarate dehydrogenase complex (sucB) of Buchnera aphidicola subsp. Schizaphis graminum (strain Sg).